We begin with the raw amino-acid sequence, 76 residues long: MAYVKKERKRIKKCKLCRDNVEYIDYKDVRKLKEFMNDKGKILPKRINGNCAKHQRMVRTAIQRARKMMLVPYVNE.

It belongs to the bacterial ribosomal protein bS18 family. Part of the 30S ribosomal subunit. Forms a tight heterodimer with protein bS6.

In terms of biological role, binds as a heterodimer with protein bS6 to the central domain of the 16S rRNA, where it helps stabilize the platform of the 30S subunit. The sequence is that of Small ribosomal subunit protein bS18 from Petrotoga mobilis (strain DSM 10674 / SJ95).